The following is a 174-amino-acid chain: RNA pyrophosphohydrolase (174 aa).

Residues 6–145 (GYRPNVGMII…KRRVYWQALQ (140 aa)) enclose the Nudix hydrolase domain. A Nudix box motif is present at residues 38-59 (GGIDYAETPEQAMFRELEEEVG).

Belongs to the Nudix hydrolase family. RppH subfamily. The cofactor is a divalent metal cation.

In terms of biological role, accelerates the degradation of transcripts by removing pyrophosphate from the 5'-end of triphosphorylated RNA, leading to a more labile monophosphorylated state that can stimulate subsequent ribonuclease cleavage. The protein is RNA pyrophosphohydrolase of Acidithiobacillus ferrooxidans (strain ATCC 53993 / BNL-5-31) (Leptospirillum ferrooxidans (ATCC 53993)).